The chain runs to 94 residues: Small ribosomal subunit protein bS18 (94 aa).

The segment covering 1–12 (MSEQNSRPQNSE) has biased composition (low complexity). Residues 1 to 29 (MSEQNSRPQNSERPQRSRRPQGGPRRRRK) form a disordered region. The segment covering 16 to 29 (RSRRPQGGPRRRRK) has biased composition (basic residues).

It belongs to the bacterial ribosomal protein bS18 family. As to quaternary structure, part of the 30S ribosomal subunit. Forms a tight heterodimer with protein bS6.

Functionally, binds as a heterodimer with protein bS6 to the central domain of the 16S rRNA, where it helps stabilize the platform of the 30S subunit. The sequence is that of Small ribosomal subunit protein bS18 from Leuconostoc mesenteroides subsp. mesenteroides (strain ATCC 8293 / DSM 20343 / BCRC 11652 / CCM 1803 / JCM 6124 / NCDO 523 / NBRC 100496 / NCIMB 8023 / NCTC 12954 / NRRL B-1118 / 37Y).